Here is a 456-residue protein sequence, read N- to C-terminus: MSATQTPTKKLYIKTHGCQMNEYDSNRMRDLLGESHNMVATENPEEADVILINTCSIREKAQEKLFHELGRWKNLKKQNPELIIGVGGCVASQEGAAIAERAPYVDLIFGPQTLHRLPEMMETKKSNGVVVVDISFPEIEKFDKLPQPDADGVSAFVSIMEGCSKYCTFCVVPYTRGEEVSRPVADVMAEVIHLAKQGVREVNLLGQNVNAYRGAAADGTIVDLAELITYIAAVDGIDRIRFTTSHPVEFTDALIEVYNQVPELVSHLHLPVQSGSDRILMAMKRGHTVLEYKSKLRRIKKNRPNISFSSDFIIGFPGETDADFEATMKLIHDMEFDTSFSFIYSPRPGTPAADLPDDTPEEVKKQRLAILQDRITQQAMAISRRMVGNTERILVSGYSKKDPGQLSGRTENNRVVNFRCDNPALIGKFADVLIEEALPNSLRGSLIASELDQDWH.

In terms of domain architecture, MTTase N-terminal spans 9–126 (KKLYIKTHGC…LPEMMETKKS (118 aa)). Positions 18, 55, 89, 163, 167, and 170 each coordinate [4Fe-4S] cluster. One can recognise a Radical SAM core domain in the interval 149–381 (DADGVSAFVS…QDRITQQAMA (233 aa)). In terms of domain architecture, TRAM spans 384–448 (RRMVGNTERI…PNSLRGSLIA (65 aa)).

This sequence belongs to the methylthiotransferase family. MiaB subfamily. In terms of assembly, monomer. [4Fe-4S] cluster is required as a cofactor.

It localises to the cytoplasm. The enzyme catalyses N(6)-dimethylallyladenosine(37) in tRNA + (sulfur carrier)-SH + AH2 + 2 S-adenosyl-L-methionine = 2-methylsulfanyl-N(6)-dimethylallyladenosine(37) in tRNA + (sulfur carrier)-H + 5'-deoxyadenosine + L-methionine + A + S-adenosyl-L-homocysteine + 2 H(+). In terms of biological role, catalyzes the methylthiolation of N6-(dimethylallyl)adenosine (i(6)A), leading to the formation of 2-methylthio-N6-(dimethylallyl)adenosine (ms(2)i(6)A) at position 37 in tRNAs that read codons beginning with uridine. The sequence is that of tRNA-2-methylthio-N(6)-dimethylallyladenosine synthase from Cellvibrio japonicus (strain Ueda107) (Pseudomonas fluorescens subsp. cellulosa).